The following is a 499-amino-acid chain: Apolipoprotein N-acyltransferase (499 aa).

6 helical membrane passes run 18-38 (FSPYNFWPASIISIFGLLIIT), 50-70 (LGFLWGIGNFFNEIYWIYISI), 82-102 (IIIILLLSSYLSLYPTIFVIL), 105-125 (FFFPKINFFLFCVGAPSAWMI), 156-176 (PIIGVSGISYILIIISGMCVL), and 182-202 (SYYPIIFIIFIITLTYPLNFF). Residues 217–461 (IQGNISQHTY…NDFLLEEVFS (245 aa)) enclose the CN hydrolase domain. Glutamate 257 functions as the Proton acceptor in the catalytic mechanism. Residue lysine 320 is part of the active site. The active-site Nucleophile is the cysteine 372. The chain crosses the membrane as a helical span at residues 476 to 496 (LLFFSIICFIISFFIKIKLIF).

It belongs to the CN hydrolase family. Apolipoprotein N-acyltransferase subfamily.

It localises to the cell membrane. The enzyme catalyses N-terminal S-1,2-diacyl-sn-glyceryl-L-cysteinyl-[lipoprotein] + a glycerophospholipid = N-acyl-S-1,2-diacyl-sn-glyceryl-L-cysteinyl-[lipoprotein] + a 2-acyl-sn-glycero-3-phospholipid + H(+). It functions in the pathway protein modification; lipoprotein biosynthesis (N-acyl transfer). Functionally, catalyzes the phospholipid dependent N-acylation of the N-terminal cysteine of apolipoprotein, the last step in lipoprotein maturation. The polypeptide is Apolipoprotein N-acyltransferase (Wigglesworthia glossinidia brevipalpis).